The chain runs to 422 residues: Serine hydroxymethyltransferase (422 aa).

Residues leucine 119 and 123–125 each bind (6S)-5,6,7,8-tetrahydrofolate; that span reads GHL. Residue lysine 228 is modified to N6-(pyridoxal phosphate)lysine. (6S)-5,6,7,8-tetrahydrofolate contacts are provided by residues glutamate 244 and 352–354; that span reads SPF.

Belongs to the SHMT family. In terms of assembly, homodimer. Pyridoxal 5'-phosphate is required as a cofactor.

It localises to the cytoplasm. The enzyme catalyses (6R)-5,10-methylene-5,6,7,8-tetrahydrofolate + glycine + H2O = (6S)-5,6,7,8-tetrahydrofolate + L-serine. Its pathway is one-carbon metabolism; tetrahydrofolate interconversion. The protein operates within amino-acid biosynthesis; glycine biosynthesis; glycine from L-serine: step 1/1. Its function is as follows. Catalyzes the reversible interconversion of serine and glycine with tetrahydrofolate (THF) serving as the one-carbon carrier. This reaction serves as the major source of one-carbon groups required for the biosynthesis of purines, thymidylate, methionine, and other important biomolecules. Also exhibits THF-independent aldolase activity toward beta-hydroxyamino acids, producing glycine and aldehydes, via a retro-aldol mechanism. The sequence is that of Serine hydroxymethyltransferase from Magnetococcus marinus (strain ATCC BAA-1437 / JCM 17883 / MC-1).